Here is an 827-residue protein sequence, read N- to C-terminus: ADP-ribosylation factor GTPase-activating protein AGD3 (827 aa).

Residues M1–Q225 enclose the BAR domain. Coiled coils occupy residues H116–F139 and A223–R253. The segment at R246–Q269 is disordered. A compositionally biased stretch (low complexity) spans G255 to G267. A PH domain is found at Q292–A430. The interval E439–D467 is disordered. At S445 the chain carries Phosphoserine. In terms of domain architecture, Arf-GAP spans E501 to D643. A C4-type zinc finger spans residues C516–C539. ANK repeat units lie at residues G728–A757, S761–A790, and E794–R825.

As to quaternary structure, homodimer. Interacts with DRP1A. Interacts with VAB. As to expression, broadly expressed. Detected in developing veins of the leaf and root. Detected in roots, hypocotyls, cotyledons, leaves, siliques and shoot apical meristems.

The protein resides in the golgi apparatus. It localises to the trans-Golgi network. Its activity is regulated as follows. ARF GAP activity strongly enhanced by phosphatidylinositol 4-monophosphate (PIP) and moderately enhanced by phosphatidylinositol 4,5-bisphosphate (PIP2). Functionally, GTPase-activating protein (GAP) for ADP ribosylation factor (ARF). Involved in the spatial control of provascular differentiation. Required for the formation of the normal pattern of continuous secondary veins. Involved in auxin signaling but not in polar auxin transport or in auxin responses. Required for PIN1 internalization in roots. In Arabidopsis thaliana (Mouse-ear cress), this protein is ADP-ribosylation factor GTPase-activating protein AGD3 (AGD3).